The primary structure comprises 238 residues: Aspartate/glutamate leucyltransferase (238 aa).

Belongs to the R-transferase family. Bpt subfamily.

The protein resides in the cytoplasm. It carries out the reaction N-terminal L-glutamyl-[protein] + L-leucyl-tRNA(Leu) = N-terminal L-leucyl-L-glutamyl-[protein] + tRNA(Leu) + H(+). The enzyme catalyses N-terminal L-aspartyl-[protein] + L-leucyl-tRNA(Leu) = N-terminal L-leucyl-L-aspartyl-[protein] + tRNA(Leu) + H(+). Its function is as follows. Functions in the N-end rule pathway of protein degradation where it conjugates Leu from its aminoacyl-tRNA to the N-termini of proteins containing an N-terminal aspartate or glutamate. The sequence is that of Aspartate/glutamate leucyltransferase from Nitrosococcus oceani (strain ATCC 19707 / BCRC 17464 / JCM 30415 / NCIMB 11848 / C-107).